The primary structure comprises 396 residues: Elongation factor Tu (396 aa).

Residues 10–206 (KPHVNVGTIG…ALDSYIPEPE (197 aa)) enclose the tr-type G domain. The interval 19–26 (GHVDHGKT) is G1. Position 19–26 (19–26 (GHVDHGKT)) interacts with GTP. Threonine 26 is a Mg(2+) binding site. Positions 60-64 (GITIN) are G2. The G3 stretch occupies residues 81–84 (DCPG). Residues 81 to 85 (DCPGH) and 136 to 139 (NKCD) contribute to the GTP site. The interval 136–139 (NKCD) is G4. A G5 region spans residues 174 to 176 (SAL).

Belongs to the TRAFAC class translation factor GTPase superfamily. Classic translation factor GTPase family. EF-Tu/EF-1A subfamily. As to quaternary structure, monomer.

It is found in the cytoplasm. The catalysed reaction is GTP + H2O = GDP + phosphate + H(+). In terms of biological role, GTP hydrolase that promotes the GTP-dependent binding of aminoacyl-tRNA to the A-site of ribosomes during protein biosynthesis. The sequence is that of Elongation factor Tu from Acinetobacter baumannii (strain ATCC 17978 / DSM 105126 / CIP 53.77 / LMG 1025 / NCDC KC755 / 5377).